The sequence spans 345 residues: uncharacterized protein (345 aa).

Belongs to the transketolase family. Requires thiamine diphosphate as cofactor.

This is an uncharacterized protein from Sinorhizobium fredii (strain NBRC 101917 / NGR234).